A 532-amino-acid chain; its full sequence is Bifunctional purine biosynthesis protein PurH (532 aa).

Residues 1 to 147 (MADRPIRQAL…KNHKDVAIVV (147 aa)) form the MGS-like domain.

It belongs to the PurH family.

The enzyme catalyses (6R)-10-formyltetrahydrofolate + 5-amino-1-(5-phospho-beta-D-ribosyl)imidazole-4-carboxamide = 5-formamido-1-(5-phospho-D-ribosyl)imidazole-4-carboxamide + (6S)-5,6,7,8-tetrahydrofolate. It carries out the reaction IMP + H2O = 5-formamido-1-(5-phospho-D-ribosyl)imidazole-4-carboxamide. The protein operates within purine metabolism; IMP biosynthesis via de novo pathway; 5-formamido-1-(5-phospho-D-ribosyl)imidazole-4-carboxamide from 5-amino-1-(5-phospho-D-ribosyl)imidazole-4-carboxamide (10-formyl THF route): step 1/1. Its pathway is purine metabolism; IMP biosynthesis via de novo pathway; IMP from 5-formamido-1-(5-phospho-D-ribosyl)imidazole-4-carboxamide: step 1/1. This is Bifunctional purine biosynthesis protein PurH from Haemophilus influenzae (strain ATCC 51907 / DSM 11121 / KW20 / Rd).